We begin with the raw amino-acid sequence, 167 residues long: UPF0179 protein PAE0681 (167 aa).

Residues 142-167 (PSPSGSSISATSQGPSRAPPSRRLLK) are disordered. A compositionally biased stretch (low complexity) spans 145–157 (SGSSISATSQGPS).

Belongs to the UPF0179 family.

In Pyrobaculum aerophilum (strain ATCC 51768 / DSM 7523 / JCM 9630 / CIP 104966 / NBRC 100827 / IM2), this protein is UPF0179 protein PAE0681.